Here is a 176-residue protein sequence, read N- to C-terminus: uncharacterized protein (176 aa).

The signal sequence occupies residues 1 to 22 (MKYNNIIFLGLCLGLTTYSALS). Cys38 and Cys78 are oxidised to a cystine.

Belongs to the fimbrial protein family.

The protein localises to the fimbrium. This is an uncharacterized protein from Escherichia coli (strain K12).